Here is a 378-residue protein sequence, read N- to C-terminus: Erythronate-4-phosphate dehydrogenase (378 aa).

Substrate contacts are provided by Ser-45 and Thr-66. The NAD(+) site is built by Asp-146 and Thr-175. Arg-208 is a catalytic residue. Asp-232 is a binding site for NAD(+). Residue Glu-237 is part of the active site. His-254 acts as the Proton donor in catalysis. Gly-257 serves as a coordination point for NAD(+). Residue Tyr-258 coordinates substrate.

This sequence belongs to the D-isomer specific 2-hydroxyacid dehydrogenase family. PdxB subfamily. In terms of assembly, homodimer.

Its subcellular location is the cytoplasm. It catalyses the reaction 4-phospho-D-erythronate + NAD(+) = (R)-3-hydroxy-2-oxo-4-phosphooxybutanoate + NADH + H(+). It functions in the pathway cofactor biosynthesis; pyridoxine 5'-phosphate biosynthesis; pyridoxine 5'-phosphate from D-erythrose 4-phosphate: step 2/5. Functionally, catalyzes the oxidation of erythronate-4-phosphate to 3-hydroxy-2-oxo-4-phosphonooxybutanoate. The polypeptide is Erythronate-4-phosphate dehydrogenase (Shigella boydii serotype 4 (strain Sb227)).